Reading from the N-terminus, the 91-residue chain is UPF0250 protein NMC1112 (91 aa).

It belongs to the UPF0250 family.

The chain is UPF0250 protein NMC1112 from Neisseria meningitidis serogroup C / serotype 2a (strain ATCC 700532 / DSM 15464 / FAM18).